The following is a 177-amino-acid chain: Adenine phosphoribosyltransferase (177 aa).

It belongs to the purine/pyrimidine phosphoribosyltransferase family. Homodimer.

The protein localises to the cytoplasm. The enzyme catalyses AMP + diphosphate = 5-phospho-alpha-D-ribose 1-diphosphate + adenine. It functions in the pathway purine metabolism; AMP biosynthesis via salvage pathway; AMP from adenine: step 1/1. Its function is as follows. Catalyzes a salvage reaction resulting in the formation of AMP, that is energically less costly than de novo synthesis. The sequence is that of Adenine phosphoribosyltransferase from Rhodococcus jostii (strain RHA1).